Here is a 119-residue protein sequence, read N- to C-terminus: Putative phosphoethanolamine transferase YjgX (119 aa).

The next 2 helical transmembrane spans lie at 5–25 and 94–114; these read VFPVYHFLVSAAILVFVVIFW and LLLSLVRVCAGIICQCMTIPY.

This sequence belongs to the phosphoethanolamine transferase family.

The protein resides in the cell inner membrane. The protein is Putative phosphoethanolamine transferase YjgX (yjgX) of Escherichia coli (strain K12).